A 273-amino-acid chain; its full sequence is Pantothenate synthetase (273 aa).

27-34 (MGALHAGH) is a binding site for ATP. Residue histidine 34 is the Proton donor of the active site. Glutamine 58 serves as a coordination point for (R)-pantoate. Residue glutamine 58 participates in beta-alanine binding. 144-147 (GKKD) provides a ligand contact to ATP. Residue glutamine 150 participates in (R)-pantoate binding. ATP-binding positions include valine 173 and 181-184 (LSSR).

This sequence belongs to the pantothenate synthetase family. Homodimer.

It is found in the cytoplasm. It catalyses the reaction (R)-pantoate + beta-alanine + ATP = (R)-pantothenate + AMP + diphosphate + H(+). The protein operates within cofactor biosynthesis; (R)-pantothenate biosynthesis; (R)-pantothenate from (R)-pantoate and beta-alanine: step 1/1. In terms of biological role, catalyzes the condensation of pantoate with beta-alanine in an ATP-dependent reaction via a pantoyl-adenylate intermediate. In Campylobacter hominis (strain ATCC BAA-381 / DSM 21671 / CCUG 45161 / LMG 19568 / NCTC 13146 / CH001A), this protein is Pantothenate synthetase.